Consider the following 737-residue polypeptide: Polyribonucleotide nucleotidyltransferase (737 aa).

Mg(2+) is bound by residues aspartate 489 and aspartate 495. In terms of domain architecture, KH spans 556 to 615; the sequence is PKIDTIKIDVDKIKIVIGKGGETIDKIIAETGVKIDIDEEGNVSIYSSDQDAINRAKEII. The S1 motif domain occupies 625–693; sequence DEVYRAKVVR…EKGRIDASMK (69 aa). Residues 691 to 737 are disordered; it reads SMKALLPRPPKPEHDEKGEKSERPHRPRHQKDHKPKKEFTETPKDSE. The segment covering 700-714 has biased composition (basic and acidic residues); sequence PKPEHDEKGEKSERP. Residues 715 to 724 show a composition bias toward basic residues; the sequence is HRPRHQKDHK. Residues 725-737 show a composition bias toward basic and acidic residues; sequence PKKEFTETPKDSE.

It belongs to the polyribonucleotide nucleotidyltransferase family. The cofactor is Mg(2+).

The protein localises to the cytoplasm. The catalysed reaction is RNA(n+1) + phosphate = RNA(n) + a ribonucleoside 5'-diphosphate. Involved in mRNA degradation. Catalyzes the phosphorolysis of single-stranded polyribonucleotides processively in the 3'- to 5'-direction. This Streptococcus pneumoniae (strain JJA) protein is Polyribonucleotide nucleotidyltransferase.